Reading from the N-terminus, the 205-residue chain is MTTDFLFPKIADCSYVSCYCEENVWKLCEQVKRTRPEELSKCYAVFVSNEGRTVPLWRQKAGRGDDQVVIWDYHVFFMHNPSPNRCLVFDLDTTLPFPTYFHKYVTETFRSDLALRPEHHRFFRVIPADTYLIEFSSDRRHMRRPDGSWIKPPPSYPPILSNTNLHCLGDFICMSAGKGPGAVYSLSEFVHNFYKSPHVMAQNNK.

Catalysis depends on residues Cys20, His74, and Asp90.

This sequence belongs to the NTAQ1 family. As to quaternary structure, monomer.

It carries out the reaction N-terminal L-glutaminyl-[protein] + H2O = N-terminal L-glutamyl-[protein] + NH4(+). Functionally, mediates the side-chain deamidation of N-terminal glutamine residues to glutamate, an important step in N-end rule pathway of protein degradation. Conversion of the resulting N-terminal glutamine to glutamate renders the protein susceptible to arginylation, polyubiquitination and degradation as specified by the N-end rule. Does not act on substrates with internal or C-terminal glutamine and does not act on non-glutamine residues in any position. The polypeptide is Protein N-terminal glutamine amidohydrolase (tun) (Drosophila ananassae (Fruit fly)).